Here is a 264-residue protein sequence, read N- to C-terminus: MKIEAVIFDWAGTTVDYGCFAPLEVFMKIFHKRGVEITAEEARKPMGLLKIDHVRALTEMPRIADEWKRVFGQLPTEADIHEMYEEFAEILFSILPSYATPIDGVKEVIASLRERGIKIGSTTGYTREMMEIVVKEAVLQGYKPDFLVTPDDVPAGRPYPWMCYKNAMELGVYPMNHMIKVGDTVSDMKEGRNAGMWTVGVILGSSELGLTEEEVESMDSVELREKIEIVRNRFVENGAHFTIETMQELENVMEHIEKQELIIS.

Catalysis depends on D9, which acts as the Nucleophile. Residues D9 and A11 each coordinate Mg(2+). K50 serves as the catalytic Schiff-base intermediate with substrate. D183 lines the Mg(2+) pocket.

It belongs to the HAD-like hydrolase superfamily. PhnX family. As to quaternary structure, homodimer. The cofactor is Mg(2+).

It catalyses the reaction phosphonoacetaldehyde + H2O = acetaldehyde + phosphate + H(+). Involved in phosphonate degradation. This Bacillus cereus (strain B4264) protein is Phosphonoacetaldehyde hydrolase.